Here is a 403-residue protein sequence, read N- to C-terminus: Peroxisomal membrane protein PEX13 (403 aa).

The span at 1–11 (MASQPPPPPKP) shows a compositional bias: pro residues. The interval 1 to 69 (MASQPPPPPK…SQQTGGNNVN (69 aa)) is disordered. Topologically, residues 1–134 (MASQPPPPPK…SSRGAFQSIE (134 aa)) are peroxisomal matrix. Residues 59 to 69 (PSQQTGGNNVN) show a composition bias toward polar residues. The helical transmembrane segment at 135-155 (SIVHAFASVSMMMDATFSAVY) threads the bilayer. Residues 145 to 233 (MMMDATFSAV…EDQANNSAKS (89 aa)) are targeting to peroxisomes. Over 156–174 (NSFRAVLDVANHFSRLKIH) the chain is Cytoplasmic. A helical transmembrane segment spans residues 175-192 (FTKVFSAFALVRTIRYLY). Residues 175–196 (FTKVFSAFALVRTIRYLYRRLQ) are interaction with PEX19. At 193–233 (RRLQWMMGLRRGSENEDLWAESEGTVACLGAEDQANNSAKS) the chain is on the peroxisomal matrix side. The chain crosses the membrane as a helical span at residues 234-254 (WPIFLFFAVILGGPYLIWKLL). The Cytoplasmic portion of the chain corresponds to 255–403 (STHSDEVTDS…TGKNGDKQDL (149 aa)). In terms of domain architecture, SH3 spans 272–336 (DDHVVARAEY…PANYVKILGK (65 aa)). 2 disordered regions span residues 341–364 (KTVESSTMPKQQQSFTNPTSVKGV) and 381–403 (FVETNKVAGTPDSTGKNGDKQDL). Residues 344 to 364 (ESSTMPKQQQSFTNPTSVKGV) show a composition bias toward polar residues.

Belongs to the peroxin-13 family. As to quaternary structure, interacts (via SH3 domain) with PEX14 (via SH3-binding motif); forming the PEX13-PEX14 docking complex. Interacts with PEX19.

It localises to the peroxisome membrane. Component of the PEX13-PEX14 docking complex, a translocon channel that specifically mediates the import of peroxisomal cargo proteins bound to PEX5 receptor. The PEX13-PEX14 docking complex forms a large import pore which can be opened to a diameter of about 9 nm. Mechanistically, PEX5 receptor along with cargo proteins associates with the PEX14 subunit of the PEX13-PEX14 docking complex in the cytosol, leading to the insertion of the receptor into the organelle membrane with the concomitant translocation of the cargo into the peroxisome matrix. Involved in the import of PTS1- and PTS2-type containing proteins. The chain is Peroxisomal membrane protein PEX13 from Rattus norvegicus (Rat).